Consider the following 416-residue polypeptide: Phosphoglycerate kinase 2 (416 aa).

Residues 28-30 (DMN), Arg-44, 65-68 (HQSR), Arg-122, and Arg-162 contribute to the substrate site. ATP is bound by residues Glu-337 and 362 to 365 (GGHI).

This sequence belongs to the phosphoglycerate kinase family. Monomer.

The protein localises to the cytoplasm. It catalyses the reaction (2R)-3-phosphoglycerate + ATP = (2R)-3-phospho-glyceroyl phosphate + ADP. Its pathway is carbohydrate degradation; glycolysis; pyruvate from D-glyceraldehyde 3-phosphate: step 2/5. The polypeptide is Phosphoglycerate kinase 2 (Methanosarcina acetivorans (strain ATCC 35395 / DSM 2834 / JCM 12185 / C2A)).